Consider the following 852-residue polypeptide: Protein SEY1 (852 aa).

The Cytoplasmic portion of the chain corresponds to 1 to 738; that stretch reads MNGHFAAVGN…KRSAIGGITQ (738 aa). The 237-residue stretch at 47–283 folds into the GB1/RHD3-type G domain; sequence GFNYHLISVF…FVGGVFLPEY (237 aa). 57–64 lines the GTP pocket; the sequence is GSQSTGKS. Positions 475-500 form a coiled coil; it reads QYRLFEKELDEVSARLRKEEMRRLAI. A helical membrane pass occupies residues 739-759; sequence VPLYFYIVLLIFGWNEIVMVL. Residues 760–762 are Lumenal-facing; that stretch reads RNP. The helical transmembrane segment at 763 to 783 threads the bilayer; the sequence is MLFMLLLVMGGGTYVAYTLNL. Topologically, residues 784–852 are cytoplasmic; that stretch reads LGPMMQMANA…AQEVEEDDDI (69 aa). Positions 825–852 are disordered; sequence RSQDNGIGMDRLDSRGKKAQEVEEDDDI. Basic and acidic residues predominate over residues 834–845; the sequence is DRLDSRGKKAQE.

Belongs to the TRAFAC class dynamin-like GTPase superfamily. GB1/RHD3 GTPase family. RHD3 subfamily.

The protein resides in the endoplasmic reticulum membrane. In terms of biological role, cooperates with the reticulon proteins and tubule-shaping DP1 family proteins to generate and maintain the structure of the tubular endoplasmic reticulum network. Has GTPase activity, which is required for its function in ER organization. The polypeptide is Protein SEY1 (Chaetomium globosum (strain ATCC 6205 / CBS 148.51 / DSM 1962 / NBRC 6347 / NRRL 1970) (Soil fungus)).